A 260-amino-acid chain; its full sequence is Adenosylcobinamide-GDP ribazoletransferase (260 aa).

6 helical membrane-spanning segments follow: residues 40 to 60, 64 to 84, 117 to 137, 142 to 162, 188 to 208, and 209 to 229; these read AFPF…LLLL, ADPL…TGAL, YGAI…AVIA, PLTA…AIAW, QFAL…AFGL, and RPLV…TAFI.

It belongs to the CobS family. Mg(2+) serves as cofactor.

It localises to the cell inner membrane. The enzyme catalyses alpha-ribazole + adenosylcob(III)inamide-GDP = adenosylcob(III)alamin + GMP + H(+). It catalyses the reaction alpha-ribazole 5'-phosphate + adenosylcob(III)inamide-GDP = adenosylcob(III)alamin 5'-phosphate + GMP + H(+). Its pathway is cofactor biosynthesis; adenosylcobalamin biosynthesis; adenosylcobalamin from cob(II)yrinate a,c-diamide: step 7/7. Its function is as follows. Joins adenosylcobinamide-GDP and alpha-ribazole to generate adenosylcobalamin (Ado-cobalamin). Also synthesizes adenosylcobalamin 5'-phosphate from adenosylcobinamide-GDP and alpha-ribazole 5'-phosphate. This Rhizobium johnstonii (strain DSM 114642 / LMG 32736 / 3841) (Rhizobium leguminosarum bv. viciae) protein is Adenosylcobinamide-GDP ribazoletransferase.